Consider the following 205-residue polypeptide: MSAKIGILAIQGDVAENVSSLVASIADLNQDATVHVVKTPEEISAMDGLVIPGGESTTIGQLSLVNGSQKVIKQKVESGMPVLGICAGMVLLASNATDRVVGKTEQPLFDFLDIELERNSFGRQRESFEANVSMDSIGISNYNGVFIRAPAISSTSDDIEVLAKLNEKIVAIKKGNIIGTSFHPELTDDLAVHKYFVNLVKETKQ.

54-56 (GES) serves as a coordination point for L-glutamine. The active-site Nucleophile is the Cys86. Residues Arg118 and 147-148 (IR) contribute to the L-glutamine site. Active-site charge relay system residues include His183 and Glu185.

It belongs to the glutaminase PdxT/SNO family. As to quaternary structure, in the presence of PdxS, forms a dodecamer of heterodimers. Only shows activity in the heterodimer.

The catalysed reaction is aldehydo-D-ribose 5-phosphate + D-glyceraldehyde 3-phosphate + L-glutamine = pyridoxal 5'-phosphate + L-glutamate + phosphate + 3 H2O + H(+). The enzyme catalyses L-glutamine + H2O = L-glutamate + NH4(+). It functions in the pathway cofactor biosynthesis; pyridoxal 5'-phosphate biosynthesis. Catalyzes the hydrolysis of glutamine to glutamate and ammonia as part of the biosynthesis of pyridoxal 5'-phosphate. The resulting ammonia molecule is channeled to the active site of PdxS. This is Pyridoxal 5'-phosphate synthase subunit PdxT from Nitrosopumilus maritimus (strain SCM1).